The chain runs to 355 residues: 3-dehydroquinate synthase (355 aa).

NAD(+) is bound by residues 71–76 (EGEASK), 105–109 (GVVGD), 129–130 (TS), K142, and K151. Residues E184, H246, and H263 each coordinate Zn(2+).

This sequence belongs to the sugar phosphate cyclases superfamily. Dehydroquinate synthase family. The cofactor is Co(2+). Requires Zn(2+) as cofactor. NAD(+) is required as a cofactor.

It is found in the cytoplasm. The catalysed reaction is 7-phospho-2-dehydro-3-deoxy-D-arabino-heptonate = 3-dehydroquinate + phosphate. It participates in metabolic intermediate biosynthesis; chorismate biosynthesis; chorismate from D-erythrose 4-phosphate and phosphoenolpyruvate: step 2/7. In terms of biological role, catalyzes the conversion of 3-deoxy-D-arabino-heptulosonate 7-phosphate (DAHP) to dehydroquinate (DHQ). This Streptococcus sanguinis (strain SK36) protein is 3-dehydroquinate synthase.